The sequence spans 1399 residues: DNA-directed RNA polymerase subunit beta' (1399 aa).

The Zn(2+) site is built by Cys70, Cys72, Cys85, and Cys88. Asp460, Asp462, and Asp464 together coordinate Mg(2+). Residues Cys814, Cys888, Cys895, and Cys898 each contribute to the Zn(2+) site.

The protein belongs to the RNA polymerase beta' chain family. The RNAP catalytic core consists of 2 alpha, 1 beta, 1 beta' and 1 omega subunit. When a sigma factor is associated with the core the holoenzyme is formed, which can initiate transcription. Mg(2+) is required as a cofactor. It depends on Zn(2+) as a cofactor.

The enzyme catalyses RNA(n) + a ribonucleoside 5'-triphosphate = RNA(n+1) + diphosphate. Its function is as follows. DNA-dependent RNA polymerase catalyzes the transcription of DNA into RNA using the four ribonucleoside triphosphates as substrates. This is DNA-directed RNA polymerase subunit beta' from Pseudomonas putida (strain ATCC 700007 / DSM 6899 / JCM 31910 / BCRC 17059 / LMG 24140 / F1).